We begin with the raw amino-acid sequence, 197 residues long: FMN-dependent NADH:quinone oxidoreductase (197 aa).

S10 is a binding site for FMN.

The protein belongs to the azoreductase type 1 family. Homodimer. FMN serves as cofactor.

It catalyses the reaction 2 a quinone + NADH + H(+) = 2 a 1,4-benzosemiquinone + NAD(+). It carries out the reaction N,N-dimethyl-1,4-phenylenediamine + anthranilate + 2 NAD(+) = 2-(4-dimethylaminophenyl)diazenylbenzoate + 2 NADH + 2 H(+). In terms of biological role, quinone reductase that provides resistance to thiol-specific stress caused by electrophilic quinones. Its function is as follows. Also exhibits azoreductase activity. Catalyzes the reductive cleavage of the azo bond in aromatic azo compounds to the corresponding amines. In Mycoplasma pneumoniae (strain ATCC 29342 / M129 / Subtype 1) (Mycoplasmoides pneumoniae), this protein is FMN-dependent NADH:quinone oxidoreductase.